Reading from the N-terminus, the 510-residue chain is Inositol-3-phosphate synthase (510 aa).

Residues Gly70, Gly71, Asn72, Asn73, Asp143, Ile180, Gln190, Arg193, Thr230, Ala231, Asn232, Thr233, Gly281, Ser282, Asp306, Ser309, Asn340, Asn341, Asp342, Lys355, Gly393, Asp394, Asp422, and Ser423 each contribute to the NAD(+) site.

The protein belongs to the myo-inositol 1-phosphate synthase family. The cofactor is NAD(+).

It is found in the cytoplasm. The protein localises to the cytosol. It localises to the nucleus. It carries out the reaction D-glucose 6-phosphate = 1D-myo-inositol 3-phosphate. It functions in the pathway polyol metabolism; myo-inositol biosynthesis; myo-inositol from D-glucose 6-phosphate: step 1/2. In terms of biological role, key enzyme in myo-inositol biosynthesis pathway that catalyzes the conversion of glucose 6-phosphate to 1-myo-inositol 1-phosphate in a NAD-dependent manner. In Nicotiana tabacum (Common tobacco), this protein is Inositol-3-phosphate synthase.